A 425-amino-acid polypeptide reads, in one-letter code: Glutamyl-tRNA reductase (425 aa).

Residues 49–52 (TCNR), serine 109, 114–116 (EGQ), and glutamine 120 contribute to the substrate site. Cysteine 50 functions as the Nucleophile in the catalytic mechanism. An NADP(+)-binding site is contributed by 189 to 194 (GAGETG).

Belongs to the glutamyl-tRNA reductase family. As to quaternary structure, homodimer.

It carries out the reaction (S)-4-amino-5-oxopentanoate + tRNA(Glu) + NADP(+) = L-glutamyl-tRNA(Glu) + NADPH + H(+). The protein operates within porphyrin-containing compound metabolism; protoporphyrin-IX biosynthesis; 5-aminolevulinate from L-glutamyl-tRNA(Glu): step 1/2. It functions in the pathway porphyrin-containing compound metabolism; chlorophyll biosynthesis. In terms of biological role, catalyzes the NADPH-dependent reduction of glutamyl-tRNA(Glu) to glutamate 1-semialdehyde (GSA). The protein is Glutamyl-tRNA reductase of Chlorobium phaeovibrioides (strain DSM 265 / 1930) (Prosthecochloris vibrioformis (strain DSM 265)).